Consider the following 432-residue polypeptide: tRNA(Ile)-lysidine synthase (432 aa).

20 to 25 (SGGLDS) is a binding site for ATP.

Belongs to the tRNA(Ile)-lysidine synthase family.

The protein localises to the cytoplasm. It catalyses the reaction cytidine(34) in tRNA(Ile2) + L-lysine + ATP = lysidine(34) in tRNA(Ile2) + AMP + diphosphate + H(+). In terms of biological role, ligates lysine onto the cytidine present at position 34 of the AUA codon-specific tRNA(Ile) that contains the anticodon CAU, in an ATP-dependent manner. Cytidine is converted to lysidine, thus changing the amino acid specificity of the tRNA from methionine to isoleucine. This chain is tRNA(Ile)-lysidine synthase, found in Shigella flexneri.